The sequence spans 271 residues: Hydroxyethylthiazole kinase (271 aa).

Substrate is bound at residue Met50. ATP contacts are provided by Arg126 and Thr172. Residue Gly199 participates in substrate binding.

The protein belongs to the Thz kinase family. Requires Mg(2+) as cofactor.

The enzyme catalyses 5-(2-hydroxyethyl)-4-methylthiazole + ATP = 4-methyl-5-(2-phosphooxyethyl)-thiazole + ADP + H(+). The protein operates within cofactor biosynthesis; thiamine diphosphate biosynthesis; 4-methyl-5-(2-phosphoethyl)-thiazole from 5-(2-hydroxyethyl)-4-methylthiazole: step 1/1. In terms of biological role, catalyzes the phosphorylation of the hydroxyl group of 4-methyl-5-beta-hydroxyethylthiazole (THZ). The polypeptide is Hydroxyethylthiazole kinase (Akkermansia muciniphila (strain ATCC BAA-835 / DSM 22959 / JCM 33894 / BCRC 81048 / CCUG 64013 / CIP 107961 / Muc)).